A 261-amino-acid chain; its full sequence is MIELLFPGWLAGIMLACAAGPLGSFVVWRRMSYFGDTLAHASLLGVAFGLLLDVNPFYAVIAVTLLLAGGLVWLEKRPQLAIDTLLGIMAHSALSLGLVVVSLMSNIRVDLMAYLFGDLLAVTPEDLISIAIGVVIVVAILFWQWRNLLSMTISPDLAFVDGVKLQRVKLLLMLVTALTIGVAMKFVGALIITSLLIIPAATARRFARTPEQMAGVAVLVGMVAVTGGLTFSAVYDTPAGPSVVLCAALLFILSMMKKQAS.

Residues 1–7 (MIELLFP) lie on the Periplasmic side of the membrane. Residues 8–28 (GWLAGIMLACAAGPLGSFVVW) form a helical membrane-spanning segment. The Cytoplasmic portion of the chain corresponds to 29–53 (RRMSYFGDTLAHASLLGVAFGLLLD). The helical transmembrane segment at 54–74 (VNPFYAVIAVTLLLAGGLVWL) threads the bilayer. The Periplasmic portion of the chain corresponds to 75 to 83 (EKRPQLAID). A helical membrane pass occupies residues 84–104 (TLLGIMAHSALSLGLVVVSLM). Residues 105–121 (SNIRVDLMAYLFGDLLA) are Cytoplasmic-facing. A helical membrane pass occupies residues 122–142 (VTPEDLISIAIGVVIVVAILF). Over 143-177 (WQWRNLLSMTISPDLAFVDGVKLQRVKLLLMLVTA) the chain is Periplasmic. Residues 178–198 (LTIGVAMKFVGALIITSLLII) form a helical membrane-spanning segment. Topologically, residues 199–213 (PAATARRFARTPEQM) are cytoplasmic. Residues 214-234 (AGVAVLVGMVAVTGGLTFSAV) traverse the membrane as a helical segment. A topological domain (periplasmic) is located at residue Tyr-235. Residues 236 to 256 (DTPAGPSVVLCAALLFILSMM) traverse the membrane as a helical segment. Residues 257–261 (KKQAS) lie on the Cytoplasmic side of the membrane.

This sequence belongs to the ABC-3 integral membrane protein family.

It localises to the cell inner membrane. In terms of biological role, involved in the high-affinity zinc uptake transport system. In Escherichia coli (strain K12), this protein is High-affinity zinc uptake system membrane protein ZnuB (znuB).